Reading from the N-terminus, the 201-residue chain is Urease accessory protein UreG (201 aa).

11–18 (GPVGSGKT) provides a ligand contact to GTP.

The protein belongs to the SIMIBI class G3E GTPase family. UreG subfamily. As to quaternary structure, homodimer. UreD, UreF and UreG form a complex that acts as a GTP-hydrolysis-dependent molecular chaperone, activating the urease apoprotein by helping to assemble the nickel containing metallocenter of UreC. The UreE protein probably delivers the nickel.

The protein localises to the cytoplasm. Functionally, facilitates the functional incorporation of the urease nickel metallocenter. This process requires GTP hydrolysis, probably effectuated by UreG. This Synechococcus sp. (strain CC9605) protein is Urease accessory protein UreG.